Reading from the N-terminus, the 113-residue chain is uncharacterized protein (113 aa).

The protein localises to the mitochondrion. This is an uncharacterized protein from Arabidopsis thaliana (Mouse-ear cress).